The sequence spans 2545 residues: uncharacterized protein (2545 aa).

Residues 17–37 (INFSITFIFINILLVFFSTFL) form a helical membrane-spanning segment. Residues 131–161 (LENIKQELHIIDRELKNILQKEENLQLINEE) adopt a coiled-coil conformation. Disordered stretches follow at residues 348–462 (NVNQ…PKKT), 587–616 (NHNM…SNDI), and 1214–1238 (RNSS…ENRR). 3 stretches are compositionally biased toward basic and acidic residues: residues 354–371 (SSDH…KNDQ), 380–391 (KNEKNEENEKNG), and 401–413 (QNGK…KNEQ). Low complexity predominate over residues 414–435 (NEQNDQIEQNYQNDPNDQNDQN). 2 stretches are compositionally biased toward basic and acidic residues: residues 437–454 (QNEK…KKNE) and 590–599 (MQRENTREDP). Over residues 600-613 (SNNMDYTNKSTSDS) the composition is skewed to polar residues. Over residues 1219–1238 (NKKERDSKKDRDSVYDENRR) the composition is skewed to basic and acidic residues. The stretch at 2303 to 2337 (KEKYKFQMNMKDSEINQLQNNLIDEFKELNEVSKL) forms a coiled coil.

It is found in the membrane. This is an uncharacterized protein from Plasmodium falciparum (isolate 3D7).